The chain runs to 877 residues: Phosphoenolpyruvate carboxylase (877 aa).

Active-site residues include H138 and K543.

It belongs to the PEPCase type 1 family. Mg(2+) serves as cofactor.

It catalyses the reaction oxaloacetate + phosphate = phosphoenolpyruvate + hydrogencarbonate. Its function is as follows. Forms oxaloacetate, a four-carbon dicarboxylic acid source for the tricarboxylic acid cycle. This chain is Phosphoenolpyruvate carboxylase, found in Aeromonas hydrophila subsp. hydrophila (strain ATCC 7966 / DSM 30187 / BCRC 13018 / CCUG 14551 / JCM 1027 / KCTC 2358 / NCIMB 9240 / NCTC 8049).